The chain runs to 193 residues: Ion-translocating oxidoreductase complex subunit A (193 aa).

Transmembrane regions (helical) follow at residues 5–25 (LLLL…FLGL), 39–59 (IGMG…SYLV), 67–87 (LGIE…VVQF), 102–122 (VLGI…VALL), 134–154 (IIYG…FSAM), and 171–191 (SIAM…TGLV).

The protein belongs to the NqrDE/RnfAE family. The complex is composed of six subunits: RnfA, RnfB, RnfC, RnfD, RnfE and RnfG.

The protein resides in the cell inner membrane. In terms of biological role, part of a membrane-bound complex that couples electron transfer with translocation of ions across the membrane. The chain is Ion-translocating oxidoreductase complex subunit A from Aliivibrio fischeri (strain ATCC 700601 / ES114) (Vibrio fischeri).